A 1388-amino-acid chain; its full sequence is Rho-associated protein kinase 2 (1388 aa).

The interval 1 to 26 is disordered; that stretch reads MSRPPPTGKMPGAPEAAPGDGAGAGR. A Protein kinase domain is found at 92 to 354; it reads YDVVKVIGRG…VEEIKQHPFF (263 aa). ATP contacts are provided by residues 98-106 and lysine 121; that span reads IGRGAFGEV. Catalysis depends on aspartate 214, which acts as the Proton acceptor. The AGC-kinase C-terminal domain occupies 357-425; the sequence is DQWNWDNIRE…FRENLLLSDS (69 aa). The segment at 363 to 784 is interaction with PPP1R12A; sequence NIRETAAPVV…LNELLKQKDV (422 aa). Positions 373-420 are interaction with NPM1; it reads PELSSDIDSSNFDDIEDDKGDVETFPIPKAFVGNQLPFIGFTYFRENL. At threonine 414 the chain carries Phosphothreonine; by ROCK2. A coiled-coil region spans residues 439-1131; the sequence is SEESQEIQKK…QLQALHIGMD (693 aa). One can recognise an REM-1 domain in the interval 497-573; that stretch reads TLRQLEREKA…LDEANALLRT (77 aa). A compositionally biased stretch (basic and acidic residues) spans 512-530; that stretch reads NAEYQRKADHEADKKRNLE. Positions 512 to 532 are disordered; the sequence is NAEYQRKADHEADKKRNLEND. Residue tyrosine 722 is modified to Phosphotyrosine; by SRC. One can recognise a RhoBD domain in the interval 979–1047; the sequence is TSDVANLANE…LAEIMNRKEP (69 aa). The segment at 979-1047 is RHOA binding; it reads TSDVANLANE…LAEIMNRKEP (69 aa). Serine 1137 is modified (phosphoserine). In terms of domain architecture, PH spans 1150-1349; the sequence is ESRLEGWLSL…WVSRLVKKIP (200 aa). Threonine 1212 is subject to Phosphothreonine. The Phorbol-ester/DAG-type zinc finger occupies 1260–1315; the sequence is GHEFIPTLYHFPTNCEACMKPLWHMFKPPPALECRRCHIKCHKDHMDKKEEIIAPC. The segment at 1345 to 1388 is disordered; it reads VKKIPKKPPAPDPFARSSPRTSMKIQQNQSIRRPSRQLAPNKPS. A phosphoserine mark is found at serine 1362 and serine 1374. Residues 1362–1376 are compositionally biased toward polar residues; that stretch reads SPRTSMKIQQNQSIR.

This sequence belongs to the protein kinase superfamily. AGC Ser/Thr protein kinase family. Homodimer. Interacts with IRS1. Interacts with RAF1. Interacts with RHOA (activated by GTP), RHOB and RHOC. Interacts with PPP1R12A. Interacts with EP300. Interacts with CHORDC1. Interacts with BRCA2. Interacts with NPM1; this interaction enhances ROCK2 activity. Interacts with SORL1. Interacts with PJVK. It depends on Mg(2+) as a cofactor. In terms of processing, autophosphorylated. Phosphorylation at Tyr-722 reduces its binding to RHOA and is crucial for focal adhesion dynamics. Dephosphorylation by PTPN11 stimulates its RHOA binding activity. Post-translationally, cleaved by granzyme B during apoptosis. This leads to constitutive activation of the kinase and membrane blebbing. Highly expressed in brain, heart, lung, liver, stomach, spleen, kidney, testis, muscle, embryo and placenta. Isoform 2 is expressed predominantly in the skeletal muscle.

The protein resides in the cytoplasm. Its subcellular location is the cell membrane. It is found in the nucleus. The protein localises to the cytoskeleton. It localises to the microtubule organizing center. The protein resides in the centrosome. The catalysed reaction is L-seryl-[protein] + ATP = O-phospho-L-seryl-[protein] + ADP + H(+). It carries out the reaction L-threonyl-[protein] + ATP = O-phospho-L-threonyl-[protein] + ADP + H(+). Activated by RHOA binding. Inhibited by Y-27632. In terms of biological role, protein kinase which is a key regulator of actin cytoskeleton and cell polarity. Involved in regulation of smooth muscle contraction, actin cytoskeleton organization, stress fiber and focal adhesion formation, neurite retraction, cell adhesion and motility via phosphorylation of ADD1, BRCA2, CNN1, EZR, DPYSL2, EP300, MSN, MYL9/MLC2, NPM1, RDX, PPP1R12A and VIM. Phosphorylates SORL1 and IRF4. Acts as a negative regulator of VEGF-induced angiogenic endothelial cell activation. Positively regulates the activation of p42/MAPK1-p44/MAPK3 and of p90RSK/RPS6KA1 during myogenic differentiation. Plays an important role in the timely initiation of centrosome duplication. Inhibits keratinocyte terminal differentiation. May regulate closure of the eyelids and ventral body wall through organization of actomyosin bundles. Plays a critical role in the regulation of spine and synaptic properties in the hippocampus. Plays a role in placental homeostasis during the perinatal period. Plays an important role in generating the circadian rhythm of the aortic myofilament Ca(2+) sensitivity and vascular contractility by modulating the myosin light chain phosphorylation. This chain is Rho-associated protein kinase 2 (Rock2), found in Mus musculus (Mouse).